The primary structure comprises 182 residues: Gamma-crystallin N (182 aa).

Beta/gamma crystallin 'Greek key' domains are found at residues 6–46 (GKIT…HVES), 47–89 (GAWV…RPVG), and 95–136 (FRLE…KVYG). A disordered region spans residues 153–182 (LSSSLQSDQGPEEATTKPATTQPPFLTANL). Over residues 169-182 (KPATTQPPFLTANL) the composition is skewed to polar residues.

Belongs to the beta/gamma-crystallin family. As to quaternary structure, monomer. In terms of tissue distribution, not specifically expressed in eye.

The protein is Gamma-crystallin N of Homo sapiens (Human).